The chain runs to 269 residues: 3-methyl-2-oxobutanoate hydroxymethyltransferase (269 aa).

The Mg(2+) site is built by D43 and D82. 3-methyl-2-oxobutanoate-binding positions include D43–S44, D82, and K110. E112 contacts Mg(2+). The active-site Proton acceptor is E179.

The protein belongs to the PanB family. As to quaternary structure, homodecamer; pentamer of dimers. Requires Mg(2+) as cofactor.

The protein resides in the cytoplasm. It carries out the reaction 3-methyl-2-oxobutanoate + (6R)-5,10-methylene-5,6,7,8-tetrahydrofolate + H2O = 2-dehydropantoate + (6S)-5,6,7,8-tetrahydrofolate. It participates in cofactor biosynthesis; (R)-pantothenate biosynthesis; (R)-pantoate from 3-methyl-2-oxobutanoate: step 1/2. Its function is as follows. Catalyzes the reversible reaction in which hydroxymethyl group from 5,10-methylenetetrahydrofolate is transferred onto alpha-ketoisovalerate to form ketopantoate. The protein is 3-methyl-2-oxobutanoate hydroxymethyltransferase of Acinetobacter baumannii (strain SDF).